We begin with the raw amino-acid sequence, 337 residues long: Palmitoyltransferase ZDHHC15 (337 aa).

The Cytoplasmic segment spans residues 1 to 20 (MRRGWKMALSGGLRCCRRVL). Residues 21–41 (SWVPVLVIVLVVLWSYYAYVF) traverse the membrane as a helical segment. At 42–56 (ELCLVTVLSPAEKVI) the chain is on the lumenal side. Residues 57–77 (YLILYHAIFVFFAWTYWKSIF) form a helical membrane-spanning segment. Residues 78-172 (TLPQQPNQKF…NNCIGFSNYK (95 aa)) are Cytoplasmic-facing. One can recognise a DHHC domain in the interval 129-179 (RFCDRCHLIKPDRCHHCSVCAMCVLKMDHHCPWVNNCIGFSNYKFFLQFLA). The Zn(2+) site is built by Cys-131, Cys-134, His-144, Cys-145, Cys-148, Cys-151, and His-158. Catalysis depends on Cys-159, which acts as the S-palmitoyl cysteine intermediate. Cys-165 contacts Zn(2+). The helical transmembrane segment at 173–193 (FFLQFLAYSVLYCLYIATTVF) threads the bilayer. Residues 194 to 210 (SYFIKYWRGELPSVRSK) lie on the Lumenal side of the membrane. The chain crosses the membrane as a helical span at residues 211 to 234 (FHVLFLLFVACMFFVSLVILFGYH). The Cytoplasmic portion of the chain corresponds to 235–337 (CWLVSRNKTT…LSSLAVESET (103 aa)). The interval 293-337 (HSFPMRSMNESQNPLLANEEPWEDNEDESQDYPEGLSSLAVESET) is disordered. Residues 312-323 (EPWEDNEDESQD) show a composition bias toward acidic residues.

Belongs to the DHHC palmitoyltransferase family. Autopalmitoylated (in vitro). As to expression, in brain, expressed in both excitatory and inhibitory neurons but not expressed by glial cells.

The protein localises to the golgi apparatus membrane. Its subcellular location is the postsynaptic density. The catalysed reaction is L-cysteinyl-[protein] + hexadecanoyl-CoA = S-hexadecanoyl-L-cysteinyl-[protein] + CoA. It carries out the reaction L-cysteinyl-[protein] + tetradecanoyl-CoA = S-tetradecanoyl-L-cysteinyl-[protein] + CoA. The enzyme catalyses L-cysteinyl-[protein] + octadecanoyl-CoA = S-octadecanoyl-L-cysteinyl-[protein] + CoA. Palmitoyltransferase that catalyzes the addition of palmitate onto various protein substrates. Has no stringent fatty acid selectivity and in addition to palmitate can also transfer onto target proteins myristate from tetradecanoyl-CoA and stearate from octadecanoyl-CoA. Palmitoylates IGF2R and SORT1, promoting their partitioning to an endosomal membrane subdomain where they can interact with the retromer cargo-selective complex. Thereby, regulates retrograde transport from endosomes to the Golgi apparatus of these lysosomal sorting receptors and plays a role in trafficking of lysosomal proteins. In the nervous system, catalyzes the palmitoylation of DLG4/PSD95 and regulates its synaptic clustering and function in synaptogenesis. Could be involved in the differentiation of dopaminergic neurons and the development of the diencephalon. Could also catalyze the palmitoylation of GAP43. Could also palmitoylate DNAJC5 and regulate its localization to the Golgi membrane. Could also palmitoylate FYN as shown in vitro. May palmitoylate CALHM3 subunit of gustatory voltage-gated ion channels and modulate channel gating and kinetics. In Rattus norvegicus (Rat), this protein is Palmitoyltransferase ZDHHC15.